Consider the following 229-residue polypeptide: Enolase-phosphatase E1 (229 aa).

Belongs to the HAD-like hydrolase superfamily. MasA/MtnC family. As to quaternary structure, monomer. Mg(2+) serves as cofactor.

It carries out the reaction 5-methylsulfanyl-2,3-dioxopentyl phosphate + H2O = 1,2-dihydroxy-5-(methylsulfanyl)pent-1-en-3-one + phosphate. The protein operates within amino-acid biosynthesis; L-methionine biosynthesis via salvage pathway; L-methionine from S-methyl-5-thio-alpha-D-ribose 1-phosphate: step 3/6. It participates in amino-acid biosynthesis; L-methionine biosynthesis via salvage pathway; L-methionine from S-methyl-5-thio-alpha-D-ribose 1-phosphate: step 4/6. Its function is as follows. Bifunctional enzyme that catalyzes the enolization of 2,3-diketo-5-methylthiopentyl-1-phosphate (DK-MTP-1-P) into the intermediate 2-hydroxy-3-keto-5-methylthiopentenyl-1-phosphate (HK-MTPenyl-1-P), which is then dephosphorylated to form the acireductone 1,2-dihydroxy-3-keto-5-methylthiopentene (DHK-MTPene). The polypeptide is Enolase-phosphatase E1 (Enterobacter sp. (strain 638)).